The following is a 376-amino-acid chain: Chaperone protein DnaJ (376 aa).

Residues 5–70 enclose the J domain; it reads DYYEVLGLSK…QKKANYDQFG (66 aa). The CR-type zinc finger occupies 133–215; it reads GVEKEISITR…CHGKGTVRKN (83 aa). The Zn(2+) site is built by C146, C149, C163, C166, C189, C192, C203, and C206. CXXCXGXG motif repeat units lie at residues 146–153, 163–170, 189–196, and 203–210; these read CDTCAGSG, CDKCGGTG, CDKCGGSG, and CTTCHGKG.

It belongs to the DnaJ family. As to quaternary structure, homodimer. Zn(2+) is required as a cofactor.

The protein resides in the cytoplasm. Its function is as follows. Participates actively in the response to hyperosmotic and heat shock by preventing the aggregation of stress-denatured proteins and by disaggregating proteins, also in an autonomous, DnaK-independent fashion. Unfolded proteins bind initially to DnaJ; upon interaction with the DnaJ-bound protein, DnaK hydrolyzes its bound ATP, resulting in the formation of a stable complex. GrpE releases ADP from DnaK; ATP binding to DnaK triggers the release of the substrate protein, thus completing the reaction cycle. Several rounds of ATP-dependent interactions between DnaJ, DnaK and GrpE are required for fully efficient folding. Also involved, together with DnaK and GrpE, in the DNA replication of plasmids through activation of initiation proteins. This chain is Chaperone protein DnaJ, found in Clostridium novyi (strain NT).